The chain runs to 254 residues: Chymotrypsin-like serine proteinase (254 aa).

An N-terminal signal peptide occupies residues 1-18; the sequence is MNALLNILLCTLAATALA. Residues 19 to 23 constitute a propeptide, activation peptide; the sequence is EISPN. In terms of domain architecture, Peptidase S1 spans 24-254; the sequence is IVGGSNAAAG…SSFYNWVQTQ (231 aa). Cys53 and Cys69 form a disulfide bridge. Catalysis depends on charge relay system residues His68 and Asp117. Disulfide bonds link Cys146/Cys218, Cys181/Cys199, and Cys208/Cys233. Ser212 functions as the Charge relay system in the catalytic mechanism.

It belongs to the peptidase S1 family. In terms of assembly, monomer. Expressed specifically in the distal quarter of the intestine.

Its subcellular location is the secreted. The protein resides in the extracellular space. With respect to regulation, activated by an autocatalytic mechanism. Functionally, specificity similar to chymotrypsin. This Haliotis rufescens (California red abalone) protein is Chymotrypsin-like serine proteinase.